A 362-amino-acid chain; its full sequence is Ribosome-binding ATPase YchF (362 aa).

Positions 3–255 (FKCGIIGLPN…MNEDEQKYFM (253 aa)) constitute an OBG-type G domain. An ATP-binding site is contributed by 12-17 (NVGKST). Mg(2+)-binding residues include Ser-16 and Thr-36. The TGS domain occupies 277–360 (NLITFFTAGI…QDGDIINFLF (84 aa)).

Belongs to the TRAFAC class OBG-HflX-like GTPase superfamily. OBG GTPase family. YchF/OLA1 subfamily. Mg(2+) is required as a cofactor.

ATPase that binds to both the 70S ribosome and the 50S ribosomal subunit in a nucleotide-independent manner. This chain is Ribosome-binding ATPase YchF, found in Buchnera aphidicola subsp. Schizaphis graminum (strain Sg).